We begin with the raw amino-acid sequence, 258 residues long: HTH-type transcriptional repressor GlcR (258 aa).

The HTH deoR-type domain maps to 3-58 (QEERLVAILDFLKQHNRITTEQICTLLQVSRDTARRDLVKLEEQNAIIRTRGGAIL). The H-T-H motif DNA-binding region spans 20 to 39 (ITTEQICTLLQVSRDTARRD).

Functionally, plays a role in carbon catabolite repression (CCR). Specifically required for transcriptional repression of the levanase operon by glucose but not by other sugars. The protein is HTH-type transcriptional repressor GlcR (glcR) of Bacillus subtilis (strain 168).